A 274-amino-acid polypeptide reads, in one-letter code: 2,3,4,5-tetrahydropyridine-2,6-dicarboxylate N-succinyltransferase (274 aa).

Residues arginine 104 and aspartate 141 each contribute to the substrate site.

Belongs to the transferase hexapeptide repeat family. In terms of assembly, homotrimer.

The protein localises to the cytoplasm. It carries out the reaction (S)-2,3,4,5-tetrahydrodipicolinate + succinyl-CoA + H2O = (S)-2-succinylamino-6-oxoheptanedioate + CoA. Its pathway is amino-acid biosynthesis; L-lysine biosynthesis via DAP pathway; LL-2,6-diaminopimelate from (S)-tetrahydrodipicolinate (succinylase route): step 1/3. The polypeptide is 2,3,4,5-tetrahydropyridine-2,6-dicarboxylate N-succinyltransferase (Yersinia enterocolitica serotype O:8 / biotype 1B (strain NCTC 13174 / 8081)).